The chain runs to 2571 residues: Highly reducing polyketide synthase 19 (2571 aa).

The disordered stretch occupies residues 1–51 (MSPIFLGDSEDAATCRCGPPSSPSPELSGTETALTSDSDGPELLNPGPQGP). Residues 27-38 (LSGTETALTSDS) show a composition bias toward polar residues. A Ketosynthase family 3 (KS3) domain is found at 51–485 (PEPIAIIGMG…GANAHCILES (435 aa)). Residues cysteine 224, histidine 359, and histidine 398 each act as for beta-ketoacyl synthase activity in the active site. The segment at 609–932 (VFTGQGAQWA…PYNSALLRGK (324 aa)) is malonyl-CoA:ACP transacylase (MAT) domain. Serine 701 serves as the catalytic For malonyltransferase activity. Residues 1019–1163 (HDLLGSRVPG…GLVKLTQNED (145 aa)) are N-terminal hotdog fold. Positions 1019-1340 (HDLLGSRVPG…SGCRMVPYSS (322 aa)) are dehydratase (DH) domain. Residues 1019–1344 (HDLLGSRVPG…MVPYSSGTAV (326 aa)) form the PKS/mFAS DH domain. Histidine 1051 serves as the catalytic Proton acceptor; for dehydratase activity. A C-terminal hotdog fold region spans residues 1177–1344 (MEQSAPRTWY…MVPYSSGTAV (168 aa)). Catalysis depends on aspartate 1241, which acts as the Proton donor; for dehydratase activity. The enoyl reductase (ER) domain stretch occupies residues 1800-2140 (NMSDAFVFTR…AFRALSGSTT (341 aa)). A ketoreductase (KR) domain region spans residues 2177-2355 (SYLLVGCLGG…ATSVGLGMIS (179 aa)). In terms of domain architecture, Carrier spans 2490 to 2568 (AVAAQALELV…MLSELIAGKL (79 aa)). Position 2527 is an O-(pantetheine 4'-phosphoryl)serine (serine 2527).

Its pathway is polyketide biosynthesis. Functionally, highly reducing polyketide synthase; part of the gene cluster that mediates the biosynthesis of pyriculol and pyriculariol, two heptaketides that induce lesion formation upon application on rice leaves but are dispensable for pathogenicity. The highly reducing polyketide synthase synthesizes the heptaketide backbone of pyriculol and pyriculariol. Pyriculol and pyriculariol contain several hydroxyl moieties and double bonds, so it can be assumed that several reduction steps occur during biosynthesis. These reactions could be executed by PKS19 itself or partly by the tailoring enzymes OXR1, PXR2, RED1, RED2 or RED3, identified within the cluster. The FAD-linked oxidoreductase OXR1 is the only tailoring enzyme for which the function has been determined yet, and is involved in the oxidation of dihydropyriculol and dihydropyriculariol into pyriculol and pyriculariol, respectively. In Pyricularia oryzae (strain 70-15 / ATCC MYA-4617 / FGSC 8958) (Rice blast fungus), this protein is Highly reducing polyketide synthase 19.